Reading from the N-terminus, the 407-residue chain is Melanoma-associated antigen B6 (407 aa).

The segment at 1–175 (MPRGHKSKLR…YDVAAEGEDE (175 aa)) is disordered. Polar residues-rich tracts occupy residues 18-29 (TNGQPQGLTGPQ), 57-71 (DASI…SPTG), 94-113 (PSTS…SPTG), and 136-155 (PSTS…SPTG). Positions 195–394 (VKKKACTLAQ…GLYPHLYEDA (200 aa)) constitute an MAGE domain.

Expressed in testis. Not expressed in other normal tissues, but is expressed in tumors of different histological origins.

The sequence is that of Melanoma-associated antigen B6 (MAGEB6) from Homo sapiens (Human).